The chain runs to 328 residues: 4-hydroxythreonine-4-phosphate dehydrogenase (328 aa).

Substrate is bound by residues histidine 133 and threonine 134. Residues histidine 163, histidine 208, and histidine 263 each contribute to the a divalent metal cation site. The substrate site is built by lysine 271, asparagine 280, and arginine 289.

This sequence belongs to the PdxA family. In terms of assembly, homodimer. It depends on Zn(2+) as a cofactor. Mg(2+) is required as a cofactor. The cofactor is Co(2+).

It is found in the cytoplasm. The enzyme catalyses 4-(phosphooxy)-L-threonine + NAD(+) = 3-amino-2-oxopropyl phosphate + CO2 + NADH. It functions in the pathway cofactor biosynthesis; pyridoxine 5'-phosphate biosynthesis; pyridoxine 5'-phosphate from D-erythrose 4-phosphate: step 4/5. In terms of biological role, catalyzes the NAD(P)-dependent oxidation of 4-(phosphooxy)-L-threonine (HTP) into 2-amino-3-oxo-4-(phosphooxy)butyric acid which spontaneously decarboxylates to form 3-amino-2-oxopropyl phosphate (AHAP). The sequence is that of 4-hydroxythreonine-4-phosphate dehydrogenase from Chromobacterium violaceum (strain ATCC 12472 / DSM 30191 / JCM 1249 / CCUG 213 / NBRC 12614 / NCIMB 9131 / NCTC 9757 / MK).